We begin with the raw amino-acid sequence, 153 residues long: Small ribosomal subunit protein uS12m (153 aa).

Residues 1 to 20 constitute a mitochondrion transit peptide; the sequence is MLSRFMSNTWCTPLRQAQRL.

Belongs to the universal ribosomal protein uS12 family. As to quaternary structure, component of the mitochondrial small ribosomal subunit (mt-SSU). Mature yeast 74S mitochondrial ribosomes consist of a small (37S) and a large (54S) subunit. The 37S small subunit contains a 15S ribosomal RNA (15S mt-rRNA) and 34 different proteins. The 54S large subunit contains a 21S rRNA (21S mt-rRNA) and 46 different proteins. uS12m forms part of the decoding center of the mt-SSU.

Its subcellular location is the mitochondrion. Functionally, component of the mitochondrial ribosome (mitoribosome), a dedicated translation machinery responsible for the synthesis of mitochondrial genome-encoded proteins, including at least some of the essential transmembrane subunits of the mitochondrial respiratory chain. The mitoribosomes are attached to the mitochondrial inner membrane and translation products are cotranslationally integrated into the membrane. uS12m is required for respiratory growth. This Saccharomyces cerevisiae (strain ATCC 204508 / S288c) (Baker's yeast) protein is Small ribosomal subunit protein uS12m (MRPS12).